The following is a 358-amino-acid chain: tRNA-specific 2-thiouridylase MnmA (358 aa).

ATP-binding positions include 7 to 14 (AMSGGVDS) and Met33. The active-site Nucleophile is Cys102. Cysteines 102 and 199 form a disulfide. ATP is bound at residue Gly126. The segment at 149–151 (KDQ) is interaction with tRNA. The Cysteine persulfide intermediate role is filled by Cys199. Residues 305–306 (RY) form an interaction with tRNA region.

It belongs to the MnmA/TRMU family.

The protein resides in the cytoplasm. It carries out the reaction S-sulfanyl-L-cysteinyl-[protein] + uridine(34) in tRNA + AH2 + ATP = 2-thiouridine(34) in tRNA + L-cysteinyl-[protein] + A + AMP + diphosphate + H(+). In terms of biological role, catalyzes the 2-thiolation of uridine at the wobble position (U34) of tRNA, leading to the formation of s(2)U34. The chain is tRNA-specific 2-thiouridylase MnmA from Halothermothrix orenii (strain H 168 / OCM 544 / DSM 9562).